Reading from the N-terminus, the 572-residue chain is Proline--tRNA ligase (572 aa).

It belongs to the class-II aminoacyl-tRNA synthetase family. ProS type 1 subfamily. In terms of assembly, homodimer.

Its subcellular location is the cytoplasm. It carries out the reaction tRNA(Pro) + L-proline + ATP = L-prolyl-tRNA(Pro) + AMP + diphosphate. Catalyzes the attachment of proline to tRNA(Pro) in a two-step reaction: proline is first activated by ATP to form Pro-AMP and then transferred to the acceptor end of tRNA(Pro). As ProRS can inadvertently accommodate and process non-cognate amino acids such as alanine and cysteine, to avoid such errors it has two additional distinct editing activities against alanine. One activity is designated as 'pretransfer' editing and involves the tRNA(Pro)-independent hydrolysis of activated Ala-AMP. The other activity is designated 'posttransfer' editing and involves deacylation of mischarged Ala-tRNA(Pro). The misacylated Cys-tRNA(Pro) is not edited by ProRS. The protein is Proline--tRNA ligase of Pectobacterium carotovorum subsp. carotovorum (strain PC1).